We begin with the raw amino-acid sequence, 401 residues long: Voltage-gated potassium channel subunit beta-1 (401 aa).

Thr90, Trp91, Gln97, and Asp119 together coordinate NADP(+). Tyr124 acts as the Proton donor/acceptor in catalysis. Residues Asn192, Ser222, Arg223, Gln248, Trp277, Ser278, Pro279, Leu280, Ala281, Cys282, Lys288, Arg298, Gly357, Ser359, Gln363, Glu366, and Asn367 each coordinate NADP(+).

It belongs to the shaker potassium channel beta subunit family. Homotetramer. Interaction with tetrameric potassium channel alpha subunits gives rise to a heterooctamer.

It localises to the cytoplasm. The protein localises to the membrane. The protein resides in the cell membrane. It catalyses the reaction a primary alcohol + NADP(+) = an aldehyde + NADPH + H(+). The enzyme catalyses a secondary alcohol + NADP(+) = a ketone + NADPH + H(+). Functionally, regulatory subunit of the voltage-gated potassium (Kv) channels composed of pore-forming and potassium-conducting alpha subunits and of regulatory beta subunits. The beta-1/KCNAB1 cytoplasmic subunit mediates closure of delayed rectifier potassium channels by physically obstructing the pore via its N-terminal domain and increases the speed of channel closure for other family members. Promotes the inactivation of KCNA1, KCNA2, KCNA4, KCNA5 and KCNA6 alpha subunit-containing channels. Displays nicotinamide adenine dinucleotide phosphate (NADPH)-dependent aldoketoreductase activity by catalyzing the NADPH-dependent reduction of a variety of endogenous aldehydes and ketones. The binding of NADPH is required for efficient down-regulation of potassium channel activity. Oxidation of the bound NADPH restrains N-terminal domain from blocking the channel, thereby decreasing N-type inactivation of potassium channel activity. This chain is Voltage-gated potassium channel subunit beta-1 (KCNAB1), found in Gallus gallus (Chicken).